The primary structure comprises 255 residues: Hydroxyacylglutathione hydrolase (255 aa).

Residues H56, H58, D60, H61, H114, D133, and H171 each contribute to the Zn(2+) site.

Belongs to the metallo-beta-lactamase superfamily. Glyoxalase II family. Monomer. Zn(2+) serves as cofactor.

It carries out the reaction an S-(2-hydroxyacyl)glutathione + H2O = a 2-hydroxy carboxylate + glutathione + H(+). The protein operates within secondary metabolite metabolism; methylglyoxal degradation; (R)-lactate from methylglyoxal: step 2/2. Thiolesterase that catalyzes the hydrolysis of S-D-lactoyl-glutathione to form glutathione and D-lactic acid. The polypeptide is Hydroxyacylglutathione hydrolase (Nitrobacter winogradskyi (strain ATCC 25391 / DSM 10237 / CIP 104748 / NCIMB 11846 / Nb-255)).